Reading from the N-terminus, the 333-residue chain is Holliday junction branch migration complex subunit RuvB (333 aa).

The interval 1–182 (MDERLLSGES…FGVLSRLEYY (182 aa)) is large ATPase domain (RuvB-L). ATP-binding positions include L21, R22, G63, K66, T67, T68, 129-131 (EDF), R172, Y182, and R219. Mg(2+) is bound at residue T67. Positions 183 to 253 (TVDQLSAIVE…ITQMALELLQ (71 aa)) are small ATPAse domain (RuvB-S). The tract at residues 256–333 (KLGLDHIDHK…EHFGMEMPKV (78 aa)) is head domain (RuvB-H). DNA-binding residues include R311 and R316.

The protein belongs to the RuvB family. As to quaternary structure, homohexamer. Forms an RuvA(8)-RuvB(12)-Holliday junction (HJ) complex. HJ DNA is sandwiched between 2 RuvA tetramers; dsDNA enters through RuvA and exits via RuvB. An RuvB hexamer assembles on each DNA strand where it exits the tetramer. Each RuvB hexamer is contacted by two RuvA subunits (via domain III) on 2 adjacent RuvB subunits; this complex drives branch migration. In the full resolvosome a probable DNA-RuvA(4)-RuvB(12)-RuvC(2) complex forms which resolves the HJ.

Its subcellular location is the cytoplasm. It catalyses the reaction ATP + H2O = ADP + phosphate + H(+). Functionally, the RuvA-RuvB-RuvC complex processes Holliday junction (HJ) DNA during genetic recombination and DNA repair, while the RuvA-RuvB complex plays an important role in the rescue of blocked DNA replication forks via replication fork reversal (RFR). RuvA specifically binds to HJ cruciform DNA, conferring on it an open structure. The RuvB hexamer acts as an ATP-dependent pump, pulling dsDNA into and through the RuvAB complex. RuvB forms 2 homohexamers on either side of HJ DNA bound by 1 or 2 RuvA tetramers; 4 subunits per hexamer contact DNA at a time. Coordinated motions by a converter formed by DNA-disengaged RuvB subunits stimulates ATP hydrolysis and nucleotide exchange. Immobilization of the converter enables RuvB to convert the ATP-contained energy into a lever motion, pulling 2 nucleotides of DNA out of the RuvA tetramer per ATP hydrolyzed, thus driving DNA branch migration. The RuvB motors rotate together with the DNA substrate, which together with the progressing nucleotide cycle form the mechanistic basis for DNA recombination by continuous HJ branch migration. Branch migration allows RuvC to scan DNA until it finds its consensus sequence, where it cleaves and resolves cruciform DNA. The chain is Holliday junction branch migration complex subunit RuvB from Bacillus cereus (strain Q1).